Here is a 394-residue protein sequence, read N- to C-terminus: MKGICILGSTGSIGVSTLDVLARHPDRYRVVALSANGNVDRLFEQCRAHRPRYAAVIRAEAAACLRERLMAAGLGGIEVLAGPEALEQIASLPEVDSVMAAIVGAAGLLPTLAAARAGKDVLLANKEALVMSGPLFMAEVARSGARLLPIDSEHNAVFQCMPAAYRAGSRAVGVRRILLTASGGPFLHTPLAELETVTPEQAVAHPNWVMGRKISVDSATMMNKGLEVIEACLLFNAKPDDVQVVVHRQSVIHSMVDYVDGTVLAQMGTPDMRIPIAHALAWPDRFESGAESLDLFAVRQLNFERPDLARFPCLRLAYEAVGAGGTAPAILNAANETAVAAFLDRRLAFTGIPRVIEHCMARVAPNAADAIESVLQADAETRKVAQKYIDDLRV.

Residues Thr-10, Gly-11, Ser-12, Ile-13, Asn-38, and Asn-125 each coordinate NADPH. Lys-126 contributes to the 1-deoxy-D-xylulose 5-phosphate binding site. Glu-127 contacts NADPH. Residue Asp-151 participates in Mn(2+) binding. The 1-deoxy-D-xylulose 5-phosphate site is built by Ser-152, Glu-153, Ser-182, and His-205. Glu-153 contributes to the Mn(2+) binding site. Position 211 (Gly-211) interacts with NADPH. The 1-deoxy-D-xylulose 5-phosphate site is built by Ser-218, Asn-223, Lys-224, and Glu-227. Glu-227 lines the Mn(2+) pocket.

It belongs to the DXR family. Mg(2+) serves as cofactor. Mn(2+) is required as a cofactor.

It catalyses the reaction 2-C-methyl-D-erythritol 4-phosphate + NADP(+) = 1-deoxy-D-xylulose 5-phosphate + NADPH + H(+). It participates in isoprenoid biosynthesis; isopentenyl diphosphate biosynthesis via DXP pathway; isopentenyl diphosphate from 1-deoxy-D-xylulose 5-phosphate: step 1/6. In terms of biological role, catalyzes the NADPH-dependent rearrangement and reduction of 1-deoxy-D-xylulose-5-phosphate (DXP) to 2-C-methyl-D-erythritol 4-phosphate (MEP). This chain is 1-deoxy-D-xylulose 5-phosphate reductoisomerase, found in Methylococcus capsulatus (strain ATCC 33009 / NCIMB 11132 / Bath).